The chain runs to 92 residues: Small ribosomal subunit protein uS19 (92 aa).

Belongs to the universal ribosomal protein uS19 family.

Protein S19 forms a complex with S13 that binds strongly to the 16S ribosomal RNA. The sequence is that of Small ribosomal subunit protein uS19 from Vibrio campbellii (strain ATCC BAA-1116).